An 86-amino-acid chain; its full sequence is Small ribosomal subunit protein bS20 (86 aa).

It belongs to the bacterial ribosomal protein bS20 family.

Functionally, binds directly to 16S ribosomal RNA. This chain is Small ribosomal subunit protein bS20, found in Bifidobacterium longum subsp. infantis (strain ATCC 15697 / DSM 20088 / JCM 1222 / NCTC 11817 / S12).